A 316-amino-acid polypeptide reads, in one-letter code: Acetaldehyde dehydrogenase (316 aa).

11–14 provides a ligand contact to NAD(+); the sequence is SGNI. Cys-131 functions as the Acyl-thioester intermediate in the catalytic mechanism. NAD(+) contacts are provided by residues 162 to 170 and Asn-289; that span reads SAGPGTRAN.

Belongs to the acetaldehyde dehydrogenase family. In terms of assembly, interacts with MhpE.

The enzyme catalyses acetaldehyde + NAD(+) + CoA = acetyl-CoA + NADH + H(+). The protein operates within aromatic compound metabolism; 3-phenylpropanoate degradation. Its function is as follows. Catalyzes the conversion of acetaldehyde to acetyl-CoA, using NAD(+) and coenzyme A. Is the final enzyme in the meta-cleavage pathway for the degradation of aromatic compounds. This Escherichia coli O7:K1 (strain IAI39 / ExPEC) protein is Acetaldehyde dehydrogenase.